Consider the following 30-residue polypeptide: Non-toxic phospholipase A2 (30 aa).

Ca(2+) contacts are provided by Tyr26, Gly28, and Gly30.

The protein belongs to the phospholipase A2 family. Group I subfamily. Homodimer. The cofactor is Ca(2+). Glycosylated. Expressed by the venom gland.

Its subcellular location is the secreted. The catalysed reaction is a 1,2-diacyl-sn-glycero-3-phosphocholine + H2O = a 1-acyl-sn-glycero-3-phosphocholine + a fatty acid + H(+). Its activity is regulated as follows. Enzymatic activity is diminished by Cd(2+) and Hg(2+). In terms of biological role, relatively highly potent phospholipase A2 that displays potent antimicrobial and hemolytic activities. It does not show cytotoxic effects on the three human cell lines tested. PLA2 catalyzes the calcium-dependent hydrolysis of the 2-acyl groups in 3-sn-phosphoglycerides. It shows similar potencies on both Gram-negative and Gram-positive bacteria: B.cereus (MIC&gt;9 ug/ml), B.subtilis (MIC&gt;12 ug/ml), E.faecalis (MIC&gt;7 ug/ml), S.epidermidis (MIC&gt;12 ug/ml), S.aureux (MIC&gt;5 ug/ml), E.coli (MIC&gt;7 ug/ml), K.pneumonia (MIC&gt;8 ug/ml), P.aeruginosa (MIC&gt;10 ug/ml), and S.enteric (MIC&gt;9 ug/ml). It also shows antifungal activities: A.niger (MIC&gt;15 ug/ml), B.cinerea (MIC&gt;12 ug/ml), F.solani (MIC&gt;15 ug/ml), and P.digitatum (MIC&gt;10 ug/ml). The polypeptide is Non-toxic phospholipase A2 (Walterinnesia aegyptia (Desert black snake)).